Here is a 332-residue protein sequence, read N- to C-terminus: tRNA-dihydrouridine synthase B (332 aa).

FMN is bound by residues 16–18 (PMA) and Gln-70. Cys-100 acts as the Proton donor in catalysis. FMN-binding positions include Lys-139, 200–202 (NGD), and 224–225 (GR).

The protein belongs to the Dus family. DusB subfamily. FMN serves as cofactor.

The catalysed reaction is a 5,6-dihydrouridine in tRNA + NAD(+) = a uridine in tRNA + NADH + H(+). It carries out the reaction a 5,6-dihydrouridine in tRNA + NADP(+) = a uridine in tRNA + NADPH + H(+). Functionally, catalyzes the synthesis of 5,6-dihydrouridine (D), a modified base found in the D-loop of most tRNAs, via the reduction of the C5-C6 double bond in target uridines. The chain is tRNA-dihydrouridine synthase B from Xanthomonas axonopodis pv. citri (strain 306).